The primary structure comprises 356 residues: Probable dual-specificity RNA methyltransferase RlmN (356 aa).

Residue Glu100 is the Proton acceptor of the active site. In terms of domain architecture, Radical SAM core spans 106–340 (TNSRLTTCVS…VSLRASRGLD (235 aa)). An intrachain disulfide couples Cys113 to Cys345. The [4Fe-4S] cluster site is built by Cys120, Cys124, and Cys127. S-adenosyl-L-methionine-binding positions include 167-168 (GE), Ser197, 226-228 (SLH), and Asn302. Cys345 serves as the catalytic S-methylcysteine intermediate.

Belongs to the radical SAM superfamily. RlmN family. The cofactor is [4Fe-4S] cluster.

It is found in the cytoplasm. It catalyses the reaction adenosine(2503) in 23S rRNA + 2 reduced [2Fe-2S]-[ferredoxin] + 2 S-adenosyl-L-methionine = 2-methyladenosine(2503) in 23S rRNA + 5'-deoxyadenosine + L-methionine + 2 oxidized [2Fe-2S]-[ferredoxin] + S-adenosyl-L-homocysteine. It carries out the reaction adenosine(37) in tRNA + 2 reduced [2Fe-2S]-[ferredoxin] + 2 S-adenosyl-L-methionine = 2-methyladenosine(37) in tRNA + 5'-deoxyadenosine + L-methionine + 2 oxidized [2Fe-2S]-[ferredoxin] + S-adenosyl-L-homocysteine. Specifically methylates position 2 of adenine 2503 in 23S rRNA and position 2 of adenine 37 in tRNAs. In Prochlorococcus marinus (strain MIT 9211), this protein is Probable dual-specificity RNA methyltransferase RlmN.